The chain runs to 196 residues: ATP-dependent Clp protease proteolytic subunit (196 aa).

Ser96 functions as the Nucleophile in the catalytic mechanism. His121 is a catalytic residue.

The protein belongs to the peptidase S14 family. Fourteen ClpP subunits assemble into 2 heptameric rings which stack back to back to give a disk-like structure with a central cavity, resembling the structure of eukaryotic proteasomes.

The protein resides in the cytoplasm. The enzyme catalyses Hydrolysis of proteins to small peptides in the presence of ATP and magnesium. alpha-casein is the usual test substrate. In the absence of ATP, only oligopeptides shorter than five residues are hydrolyzed (such as succinyl-Leu-Tyr-|-NHMec, and Leu-Tyr-Leu-|-Tyr-Trp, in which cleavage of the -Tyr-|-Leu- and -Tyr-|-Trp bonds also occurs).. In terms of biological role, cleaves peptides in various proteins in a process that requires ATP hydrolysis. Has a chymotrypsin-like activity. Plays a major role in the degradation of misfolded proteins. The protein is ATP-dependent Clp protease proteolytic subunit of Streptococcus pneumoniae (strain P1031).